Here is a 34-residue protein sequence, read N- to C-terminus: Stromal 70 kDa heat shock-related protein, chloroplastic (34 aa).

This sequence belongs to the heat shock protein 70 family.

The protein localises to the plastid. It localises to the chloroplast stroma. Its function is as follows. Interacts with newly imported chloroplast proteins to assist in their maturation. This Cucurbita maxima (Pumpkin) protein is Stromal 70 kDa heat shock-related protein, chloroplastic.